We begin with the raw amino-acid sequence, 284 residues long: D-tagatose-1,6-bisphosphate aldolase subunit GatY (284 aa).

The active-site Proton donor is the Asp82. Zn(2+) contacts are provided by His83 and His180. Residue Gly181 participates in dihydroxyacetone phosphate binding. Zn(2+) is bound at residue His208. Residues 209–211 (GAS) and 230–233 (NVAT) each bind dihydroxyacetone phosphate.

Belongs to the class II fructose-bisphosphate aldolase family. TagBP aldolase GatY subfamily. As to quaternary structure, forms a complex with GatZ. Requires Zn(2+) as cofactor.

The catalysed reaction is D-tagatofuranose 1,6-bisphosphate = D-glyceraldehyde 3-phosphate + dihydroxyacetone phosphate. It functions in the pathway carbohydrate metabolism; D-tagatose 6-phosphate degradation; D-glyceraldehyde 3-phosphate and glycerone phosphate from D-tagatose 6-phosphate: step 2/2. In terms of biological role, catalytic subunit of the tagatose-1,6-bisphosphate aldolase GatYZ, which catalyzes the reversible aldol condensation of dihydroxyacetone phosphate (DHAP or glycerone-phosphate) with glyceraldehyde 3-phosphate (G3P) to produce tagatose 1,6-bisphosphate (TBP). Requires GatZ subunit for full activity and stability. Is involved in the catabolism of galactitol. This is D-tagatose-1,6-bisphosphate aldolase subunit GatY from Salmonella choleraesuis (strain SC-B67).